We begin with the raw amino-acid sequence, 239 residues long: ATP-dependent dethiobiotin synthetase BioD (239 aa).

15 to 20 is an ATP binding site; the sequence is EIGKTF. Position 19 (Thr19) interacts with Mg(2+). Lys40 is a catalytic residue. ATP is bound by residues Asp57, 118-121, 178-179, and 211-213; these read EGVG, NH, and AHL. 2 residues coordinate Mg(2+): Asp57 and Glu118.

This sequence belongs to the dethiobiotin synthetase family. In terms of assembly, homodimer. Requires Mg(2+) as cofactor.

It is found in the cytoplasm. It carries out the reaction (7R,8S)-7,8-diammoniononanoate + CO2 + ATP = (4R,5S)-dethiobiotin + ADP + phosphate + 3 H(+). Its pathway is cofactor biosynthesis; biotin biosynthesis; biotin from 7,8-diaminononanoate: step 1/2. Functionally, catalyzes a mechanistically unusual reaction, the ATP-dependent insertion of CO2 between the N7 and N8 nitrogen atoms of 7,8-diaminopelargonic acid (DAPA, also called 7,8-diammoniononanoate) to form a ureido ring. In Burkholderia vietnamiensis (strain G4 / LMG 22486) (Burkholderia cepacia (strain R1808)), this protein is ATP-dependent dethiobiotin synthetase BioD.